A 769-amino-acid polypeptide reads, in one-letter code: Homoaconitase, mitochondrial (769 aa).

Residues 1–28 (MQSRLLPSGPGRRWISLRVPNTPQRRAF) constitute a mitochondrion transit peptide. [4Fe-4S] cluster-binding residues include Cys-391, Cys-460, and Cys-463.

This sequence belongs to the aconitase/IPM isomerase family. It depends on [4Fe-4S] cluster as a cofactor.

It is found in the mitochondrion. It catalyses the reaction (2R,3S)-homoisocitrate = cis-homoaconitate + H2O. It functions in the pathway amino-acid biosynthesis; L-lysine biosynthesis via AAA pathway; L-alpha-aminoadipate from 2-oxoglutarate: step 3/5. Its function is as follows. Catalyzes the reversible hydration of cis-homoaconitate to (2R,3S)-homoisocitrate, a step in the alpha-aminoadipate pathway for lysine biosynthesis. The sequence is that of Homoaconitase, mitochondrial (lysA) from Aspergillus niger (strain ATCC MYA-4892 / CBS 513.88 / FGSC A1513).